The chain runs to 35 residues: UPF0387 membrane protein YohO (35 aa).

Residues 6–26 (IGVIALFLLMAIGGIGGVMLA) traverse the membrane as a helical segment.

Belongs to the UPF0387 family.

The protein resides in the cell inner membrane. The polypeptide is UPF0387 membrane protein YohO (Salmonella paratyphi A (strain ATCC 9150 / SARB42)).